We begin with the raw amino-acid sequence, 270 residues long: MTVRQRLLSYFFNRLRMNYPQILSPVLNFLHCPTPQAWIVQARDPQNLPLLLTDHLICELKAAQTALLLVRKYVADKSGADALLSWLQPYEAFAFRQGPEPDFVALHKQISKSAMPQTDDPWGRQLIDRMVLLIKEELHHFWQVREVMQARNIPYVKITASRYAKGMLKAVRTHEPLTLIDKLICGAYIEARSCERFAALAPWLDEDLQTFYLSLLRSEARHYQDYLALAQQISAEDISARVRYFGEVEADLILSPDREFRFHSGVPAAG.

6 residues coordinate Fe cation: Glu59, Glu137, His140, Glu190, Glu219, and His222.

Belongs to the MiaE family. Monomer. Fe cation is required as a cofactor.

It catalyses the reaction 2-methylsulfanyl-N(6)-dimethylallyladenosine(37) in tRNA + AH2 + O2 = N(6)-[(2E)-4-hydroxy-3-methylbut-2-en-1-yl]-2-(methylsulfanyl)adenosine(37) in tRNA + A + H2O. It participates in tRNA modification; 2-methylthio-N-6-(cis-hydroxy)isopentenyl adenosine-tRNA biosynthesis. In terms of biological role, involved in specific tRNA modification. Catalyzes the oxygen-dependent hydroxylation of 2-methylthio-N-6-isopentenyl adenosine (ms2i6A) to produce 2-methylthio-N-6-(cis-hydroxy)isopentenyl adenosine (ms2io6A) at position 37 in tRNAs. Can also use N6-(dimethylallyl)adenosine (i6A) as substrate, with lower efficiency. The presence of the hydroxyl group on the tRNA may regulate the ability of S.typhimurium to grow on the citric acid cycle (CAC) intermediates succinate, fumarate and malate. The polypeptide is tRNA 2-(methylsulfanyl)-N(6)-isopentenyladenosine(37) hydroxylase (Salmonella typhimurium (strain LT2 / SGSC1412 / ATCC 700720)).